The primary structure comprises 60 residues: Large ribosomal subunit protein bL32 (60 aa).

The protein belongs to the bacterial ribosomal protein bL32 family.

In Clostridium acetobutylicum (strain ATCC 824 / DSM 792 / JCM 1419 / IAM 19013 / LMG 5710 / NBRC 13948 / NRRL B-527 / VKM B-1787 / 2291 / W), this protein is Large ribosomal subunit protein bL32.